Here is a 172-residue protein sequence, read N- to C-terminus: NADH dehydrogenase [ubiquinone] 1 alpha subcomplex subunit 8 (172 aa).

CHCH domains lie at 33–74 and 75–118; these read GAQC…FRQI and KRHC…MGWV. 4 consecutive short sequence motifs (cx9C motif) follow at residues 36 to 46, 56 to 66, 78 to 88, and 100 to 110; these read CDKPNKEFMLC, CLEEGKLVNKC, CAEPFTEYWTC, and CRKQQAKFDEC. 4 disulfide bridges follow: Cys-36-Cys-66, Cys-46-Cys-56, Cys-78-Cys-110, and Cys-88-Cys-100. Residues 133–159 form a disordered region; sequence TDRPLPENPYHSRPRPDPSPEIEGDLK. Positions 146-159 are enriched in basic and acidic residues; sequence PRPDPSPEIEGDLK.

This sequence belongs to the complex I NDUFA8 subunit family. As to quaternary structure, complex I is composed of 45 different subunits.

The protein localises to the mitochondrion inner membrane. Its subcellular location is the mitochondrion intermembrane space. It is found in the mitochondrion. Accessory subunit of the mitochondrial membrane respiratory chain NADH dehydrogenase (Complex I), that is believed not to be involved in catalysis. Complex I functions in the transfer of electrons from NADH to the respiratory chain. The immediate electron acceptor for the enzyme is believed to be ubiquinone. The polypeptide is NADH dehydrogenase [ubiquinone] 1 alpha subcomplex subunit 8 (NDUFA8) (Pongo abelii (Sumatran orangutan)).